The sequence spans 201 residues: Small ribosomal subunit protein uS4c (201 aa).

The interval 15 to 43 is disordered; the sequence is LGALPGLTNKRPRAGSDLRNQSRSGKRSQ. The S4 RNA-binding domain maps to 89-149; the sequence is MRLDNILFRL…DEQKSIALIQ (61 aa).

Component of the chloroplast small ribosomal subunit (SSU). Mature 70S chloroplast ribosomes of higher plants consist of a small (30S) and a large (50S) subunit. The 30S small subunit contains 1 molecule of ribosomal RNA (16S rRNA) and 24 different proteins. The 50S large subunit contains 3 rRNA molecules (23S, 5S and 4.5S rRNA) and 33 different proteins.

The protein resides in the plastid. The protein localises to the chloroplast. Component of the chloroplast ribosome (chloro-ribosome), a dedicated translation machinery responsible for the synthesis of chloroplast genome-encoded proteins, including proteins of the transcription and translation machinery and components of the photosynthetic apparatus. The chain is Small ribosomal subunit protein uS4c (rps4) from Spinacia oleracea (Spinach).